Reading from the N-terminus, the 269-residue chain is Thymidylate synthase (269 aa).

Position 21 (arginine 21) interacts with dUMP. Histidine 51 is a binding site for (6R)-5,10-methylene-5,6,7,8-tetrahydrofolate. 126 to 127 (RR) is a dUMP binding site. Cysteine 146 acts as the Nucleophile in catalysis. DUMP is bound by residues 171-174 (RSGD), asparagine 182, and 212-214 (HLY). Aspartate 174 contacts (6R)-5,10-methylene-5,6,7,8-tetrahydrofolate. Alanine 268 serves as a coordination point for (6R)-5,10-methylene-5,6,7,8-tetrahydrofolate.

The protein belongs to the thymidylate synthase family. Bacterial-type ThyA subfamily. As to quaternary structure, homodimer.

It localises to the cytoplasm. It carries out the reaction dUMP + (6R)-5,10-methylene-5,6,7,8-tetrahydrofolate = 7,8-dihydrofolate + dTMP. It functions in the pathway pyrimidine metabolism; dTTP biosynthesis. Its function is as follows. Catalyzes the reductive methylation of 2'-deoxyuridine-5'-monophosphate (dUMP) to 2'-deoxythymidine-5'-monophosphate (dTMP) while utilizing 5,10-methylenetetrahydrofolate (mTHF) as the methyl donor and reductant in the reaction, yielding dihydrofolate (DHF) as a by-product. This enzymatic reaction provides an intracellular de novo source of dTMP, an essential precursor for DNA biosynthesis. This chain is Thymidylate synthase, found in Methylocella silvestris (strain DSM 15510 / CIP 108128 / LMG 27833 / NCIMB 13906 / BL2).